Reading from the N-terminus, the 603-residue chain is D-3-phosphoglycerate dehydrogenase 1, chloroplastic (603 aa).

A chloroplast-targeting transit peptide spans 1-54 (MSATAAASSSIAVATNSLRNVTLSSRSPLPSAISVAFPSRGRNTLQRRLVLVSC). NAD(+) is bound by residues 210–211 (KV), aspartate 230, 289–291 (VAR), and aspartate 315. Arginine 291 is an active-site residue. Glutamate 320 is an active-site residue. The Proton donor role is filled by histidine 339. An NAD(+)-binding site is contributed by 339–342 (HLGA). The ACT domain maps to 531-603 (IILCRQVDQP…AVEEFVFLKL (73 aa)).

This sequence belongs to the D-isomer specific 2-hydroxyacid dehydrogenase family. In terms of tissue distribution, ubiquitous, but highly expressed in roots. Expressed in vasculature, root and shoot meristems, distal part of cotyledons and leaves, anther, stigma and pollen grains. Detected at the tip of the cotyledons in late embryos.

The protein resides in the plastid. The protein localises to the chloroplast. The enzyme catalyses (2R)-3-phosphoglycerate + NAD(+) = 3-phosphooxypyruvate + NADH + H(+). It participates in amino-acid biosynthesis; L-serine biosynthesis; L-serine from 3-phospho-D-glycerate: step 1/3. With respect to regulation, partially inhibited by 5 mM serine. Functionally, involved in the plastidial phosphorylated pathway of serine biosynthesis (PPSB). Required for mature pollen development. This is D-3-phosphoglycerate dehydrogenase 1, chloroplastic (PGDH1) from Arabidopsis thaliana (Mouse-ear cress).